A 263-amino-acid chain; its full sequence is Ribonuclease HII (263 aa).

Residues 71-262 (QAIAGIDEVG…VKSMCCDSTN (192 aa)) form the RNase H type-2 domain. Positions 77, 78, and 172 each coordinate a divalent metal cation.

This sequence belongs to the RNase HII family. Mn(2+) is required as a cofactor. Requires Mg(2+) as cofactor.

The protein localises to the cytoplasm. The catalysed reaction is Endonucleolytic cleavage to 5'-phosphomonoester.. Endonuclease that specifically degrades the RNA of RNA-DNA hybrids. This Streptococcus pyogenes serotype M4 (strain MGAS10750) protein is Ribonuclease HII.